The chain runs to 1872 residues: Ral GTPase-activating protein subunit alpha-2 (1872 aa).

Residues 350–370 (DGAGSTEQDKSHSNSSTLSDR) are disordered. Ser-373, Ser-376, and Ser-379 each carry phosphoserine. The segment covering 445–469 (PDKKDVAQEDADKLGLSETDSKEAS) has biased composition (basic and acidic residues). Residues 445–481 (PDKKDVAQEDADKLGLSETDSKEASSESSGHKRSSSW) are disordered. Ser-486 carries the post-translational modification Phosphoserine. The residue at position 696 (Ser-696) is a Phosphoserine; by PKB. Disordered stretches follow at residues 711–730 (FRSA…NTVR) and 758–813 (QQVP…GITM). Position 715 is a phosphothreonine; by PKB (Thr-715). Polar residues-rich tracts occupy residues 758 to 768 (QQVPRSSSTSD) and 775 to 795 (SDSS…SEPK). Residues 796 to 810 (SVQESKGHVTHEHEG) show a composition bias toward basic and acidic residues. Phosphoserine is present on residues Ser-819 and Ser-820. A disordered region spans residues 831–851 (QQAHGRCRQRQTSESTGSDTV). Polar residues predominate over residues 840 to 849 (RQTSESTGSD). Ser-1592 bears the Phosphoserine mark. The 209-residue stretch at 1634 to 1842 (LKNLDSRQCR…EERALYLEAI (209 aa)) folds into the Rap-GAP domain.

As to quaternary structure, component of the heterodimeric RalGAP2 complex with RALGAPB. Heterodimerization is required for activity. In terms of tissue distribution, abundantly expressed in testis, pancreas, lung, thymus, brown fat, and white fat.

The protein resides in the cytoplasm. Its function is as follows. Catalytic subunit of the heterodimeric RalGAP2 complex which acts as a GTPase activator for the Ras-like small GTPases RALA and RALB. The polypeptide is Ral GTPase-activating protein subunit alpha-2 (Ralgapa2) (Mus musculus (Mouse)).